A 968-amino-acid chain; its full sequence is RNA polymerase-associated protein RapA (968 aa).

The Helicase ATP-binding domain maps to 163 to 332; that stretch reads EVGRRFAPRV…FARLRLLDPD (170 aa). 176–183 is an ATP binding site; it reads DEVGLGKT. The DEAH box motif lies at 278–281; sequence DEAH. Positions 491–641 constitute a Helicase C-terminal domain; it reads RVDWLINFLK…AFEQTCPSGH (151 aa).

Belongs to the SNF2/RAD54 helicase family. RapA subfamily. Interacts with the RNAP. Has a higher affinity for the core RNAP than for the holoenzyme. Its ATPase activity is stimulated by binding to RNAP.

Transcription regulator that activates transcription by stimulating RNA polymerase (RNAP) recycling in case of stress conditions such as supercoiled DNA or high salt concentrations. Probably acts by releasing the RNAP, when it is trapped or immobilized on tightly supercoiled DNA. Does not activate transcription on linear DNA. Probably not involved in DNA repair. This Shewanella sediminis (strain HAW-EB3) protein is RNA polymerase-associated protein RapA.